We begin with the raw amino-acid sequence, 250 residues long: Transmembrane protein 106C (250 aa).

The segment at 1–25 is disordered; it reads MGSQHSAAARPSSCRRKQEDDRDGL. A lipid anchor (N-myristoyl glycine) is attached at Gly2. A compositionally biased stretch (basic and acidic residues) spans 16 to 25; that stretch reads RKQEDDRDGL. The helical transmembrane segment at 87 to 107 threads the bilayer; it reads YVLLSILLCLLASGLVVFFLF. N-linked (GlcNAc...) asparagine glycans are attached at residues Asn173 and Asn186. The chain crosses the membrane as a helical span at residues 197 to 217; sequence FSYVYFFCTVPEILVHNIVIF.

The protein belongs to the TMEM106 family. Interacts with TMEM106B.

The protein localises to the endoplasmic reticulum membrane. It localises to the membrane. The protein is Transmembrane protein 106C (TMEM106C) of Homo sapiens (Human).